We begin with the raw amino-acid sequence, 1114 residues long: Mediator of RNA polymerase II transcription subunit 14 (1114 aa).

3 disordered regions span residues 1–27, 40–79, and 120–141; these read MPGVVMDNANIGGLRHGPGNTYPQDGL, ANAQDGPVHVNGVEKNASQSRSVEAIPSNHASRVTKGPPE, and HGIHPSTAPTTGKSPGNQSPGN. Over residues 126-140 the composition is skewed to polar residues; the sequence is TAPTTGKSPGNQSPG.

Belongs to the Mediator complex subunit 14 family. Component of the Mediator complex.

The protein resides in the nucleus. Functionally, component of the Mediator complex, a coactivator involved in the regulated transcription of nearly all RNA polymerase II-dependent genes. Mediator functions as a bridge to convey information from gene-specific regulatory proteins to the basal RNA polymerase II transcription machinery. Mediator is recruited to promoters by direct interactions with regulatory proteins and serves as a scaffold for the assembly of a functional preinitiation complex with RNA polymerase II and the general transcription factors. The polypeptide is Mediator of RNA polymerase II transcription subunit 14 (rgr1) (Aspergillus niger (strain ATCC MYA-4892 / CBS 513.88 / FGSC A1513)).